A 1255-amino-acid polypeptide reads, in one-letter code: DNA-directed RNA polymerase subunit beta' (1255 aa).

Residues Cys-60, Cys-62, Cys-77, and Cys-80 each contribute to the Zn(2+) site. Positions 503, 505, and 507 each coordinate Mg(2+). Positions 875, 950, 957, and 960 each coordinate Zn(2+).

This sequence belongs to the RNA polymerase beta' chain family. The RNAP catalytic core consists of 2 alpha, 1 beta, 1 beta' and 1 omega subunit. When a sigma factor is associated with the core the holoenzyme is formed, which can initiate transcription. Requires Mg(2+) as cofactor. The cofactor is Zn(2+).

It carries out the reaction RNA(n) + a ribonucleoside 5'-triphosphate = RNA(n+1) + diphosphate. DNA-dependent RNA polymerase catalyzes the transcription of DNA into RNA using the four ribonucleoside triphosphates as substrates. This chain is DNA-directed RNA polymerase subunit beta', found in Mycoplasma mycoides subsp. mycoides SC (strain CCUG 32753 / NCTC 10114 / PG1).